The following is a 243-amino-acid chain: CAVP-target protein (243 aa).

Residues 1 to 22 (PKPPAEAKPAAKPAAPPAAANP) form a disordered region. Residues 7-20 (AKPAAKPAAPPAAA) are compositionally biased toward low complexity. An IQ domain is found at 35–62 (SAATRIQASFRMHKNRMALKEKSIPKFS). 2 consecutive Ig-like C2-type domains span residues 59-150 (PKFS…LALE) and 151-243 (VPAK…VKVN).

Its function is as follows. This protein is the target of CAVP, which binds to it in a calcium-dependent manner. The chain is CAVP-target protein from Branchiostoma lanceolatum (Common lancelet).